Here is a 479-residue protein sequence, read N- to C-terminus: Ankyrin repeat, SAM and basic leucine zipper domain-containing protein 1 (479 aa).

Ser-22 and Ser-24 each carry phosphoserine. 6 ANK repeats span residues 49–78, 82–111, 114–148, 152–181, 185–214, and 218–247; these read EKNE…SVDS, YGWT…NASF, DKQT…DPNV, RLMT…EVNT, NGYT…NKML, and DGKT…PLEG. The SAM domain occupies 276–338; the sequence is SYTALGDLEI…KILDALKELQ (63 aa).

In terms of assembly, interacts with DDX4, PIWIL1, RANBP9 and TDRD1.

It is found in the cytoplasm. Functionally, plays a central role during spermatogenesis by repressing transposable elements and preventing their mobilization, which is essential for the germline integrity. Acts via the piRNA metabolic process, which mediates the repression of transposable elements during meiosis by forming complexes composed of piRNAs and Piwi proteins and governs the methylation and subsequent repression of transposons. Its association with pi-bodies suggests a participation in the primary piRNAs metabolic process. Required prior to the pachytene stage to facilitate the production of multiple types of piRNAs, including those associated with repeats involved in the regulation of retrotransposons. May act by mediating protein-protein interactions during germ cell maturation. The protein is Ankyrin repeat, SAM and basic leucine zipper domain-containing protein 1 (ASZ1) of Rhinolophus ferrumequinum (Greater horseshoe bat).